Consider the following 348-residue polypeptide: Anthranilate phosphoribosyltransferase (348 aa).

5-phospho-alpha-D-ribose 1-diphosphate contacts are provided by residues G83, 86–87 (GD), T91, 93–96 (NVST), 111–119 (KHGNRAASS), and T123. Anthranilate is bound at residue G83. S95 contributes to the Mg(2+) binding site. Anthranilate is bound at residue N114. R169 contacts anthranilate. Mg(2+) contacts are provided by D227 and E228.

This sequence belongs to the anthranilate phosphoribosyltransferase family. In terms of assembly, homodimer. Mg(2+) is required as a cofactor.

It carries out the reaction N-(5-phospho-beta-D-ribosyl)anthranilate + diphosphate = 5-phospho-alpha-D-ribose 1-diphosphate + anthranilate. The protein operates within amino-acid biosynthesis; L-tryptophan biosynthesis; L-tryptophan from chorismate: step 2/5. Catalyzes the transfer of the phosphoribosyl group of 5-phosphorylribose-1-pyrophosphate (PRPP) to anthranilate to yield N-(5'-phosphoribosyl)-anthranilate (PRA). In Thermobifida fusca (strain YX), this protein is Anthranilate phosphoribosyltransferase.